The primary structure comprises 311 residues: Aspartate carbamoyltransferase catalytic subunit (311 aa).

The carbamoyl phosphate site is built by arginine 55 and threonine 56. Residue lysine 85 coordinates L-aspartate. Carbamoyl phosphate contacts are provided by arginine 106, histidine 135, and glutamine 138. L-aspartate-binding residues include arginine 168 and arginine 230. Carbamoyl phosphate is bound by residues leucine 268 and proline 269.

This sequence belongs to the aspartate/ornithine carbamoyltransferase superfamily. ATCase family. Heterododecamer (2C3:3R2) of six catalytic PyrB chains organized as two trimers (C3), and six regulatory PyrI chains organized as three dimers (R2).

It catalyses the reaction carbamoyl phosphate + L-aspartate = N-carbamoyl-L-aspartate + phosphate + H(+). It functions in the pathway pyrimidine metabolism; UMP biosynthesis via de novo pathway; (S)-dihydroorotate from bicarbonate: step 2/3. Catalyzes the condensation of carbamoyl phosphate and aspartate to form carbamoyl aspartate and inorganic phosphate, the committed step in the de novo pyrimidine nucleotide biosynthesis pathway. The polypeptide is Aspartate carbamoyltransferase catalytic subunit (Baumannia cicadellinicola subsp. Homalodisca coagulata).